A 1237-amino-acid chain; its full sequence is Clustered mitochondria protein homolog (1237 aa).

Positions 291–535 constitute a Clu domain; it reads DITRSQENCL…RITPLDVAWS (245 aa). Basic and acidic residues-rich tracts occupy residues 575–597 and 845–854; these read RKTA…DKAE and SQIKSQEHSP. 2 disordered regions span residues 575 to 614 and 845 to 886; these read RKTA…AVAS and SQIK…VAAS. TPR repeat units follow at residues 957–990, 999–1032, and 1041–1074; these read AKLY…TERT, ILSY…WKII, and ITTM…CEGL. 2 disordered regions span residues 1152 to 1189 and 1201 to 1237; these read RLRR…KSIG and FIEG…VQTA. The span at 1156-1187 shows a compositional bias: polar residues; it reads TNLSPRMTIGTKPQPQVGQNAPATTNGATSKS.

This sequence belongs to the CLU family. May associate with the eukaryotic translation initiation factor 3 (eIF-3) complex.

The protein resides in the cytoplasm. In terms of biological role, mRNA-binding protein involved in proper cytoplasmic distribution of mitochondria. The sequence is that of Clustered mitochondria protein homolog from Ajellomyces capsulatus (strain NAm1 / WU24) (Darling's disease fungus).